A 380-amino-acid polypeptide reads, in one-letter code: Shedu protein SduA (380 aa).

In terms of biological role, only component of antiviral defense system Shedu. Expression of Shedu in B.subtilis (strain BEST7003) confers resistance to phages phi105, phi29, rho14 and to a lesser extent to SPP1. May be an endonuclease. The sequence is that of Shedu protein SduA from Bacillus cereus (strain B4264).